The sequence spans 258 residues: Methionine aminopeptidase (258 aa).

Residue histidine 84 coordinates substrate. A divalent metal cation is bound by residues aspartate 102, aspartate 113, and histidine 176. Histidine 183 contributes to the substrate binding site. A divalent metal cation is bound by residues glutamate 211 and glutamate 242.

The protein belongs to the peptidase M24A family. Methionine aminopeptidase type 1 subfamily. In terms of assembly, monomer. The cofactor is Co(2+). It depends on Zn(2+) as a cofactor. Requires Mn(2+) as cofactor. Fe(2+) serves as cofactor.

The enzyme catalyses Release of N-terminal amino acids, preferentially methionine, from peptides and arylamides.. Its function is as follows. Removes the N-terminal methionine from nascent proteins. The N-terminal methionine is often cleaved when the second residue in the primary sequence is small and uncharged (Met-Ala-, Cys, Gly, Pro, Ser, Thr, or Val). Requires deformylation of the N(alpha)-formylated initiator methionine before it can be hydrolyzed. The chain is Methionine aminopeptidase from Aquifex aeolicus (strain VF5).